A 302-amino-acid chain; its full sequence is GTP cyclohydrolase FolE2 (302 aa).

This sequence belongs to the GTP cyclohydrolase IV family.

The catalysed reaction is GTP + H2O = 7,8-dihydroneopterin 3'-triphosphate + formate + H(+). Its pathway is cofactor biosynthesis; 7,8-dihydroneopterin triphosphate biosynthesis; 7,8-dihydroneopterin triphosphate from GTP: step 1/1. Functionally, converts GTP to 7,8-dihydroneopterin triphosphate. The protein is GTP cyclohydrolase FolE2 of Pseudoalteromonas translucida (strain TAC 125).